Consider the following 292-residue polypeptide: Zinc finger protein OZF (292 aa).

C2H2-type zinc fingers lie at residues 16-38, 44-66, 72-94, 100-122, 128-150, 156-178, 184-206, 212-234, 240-262, and 268-290; these read FACK…EHFH, FECN…QNTH, FECN…QKIH, FECK…QRTH, FVCK…EKIH, FKCS…QNIH, YECN…VRIH, YECN…VRSH, YGCN…LRIH, and YQCS…QKIH. Residues lysine 28, lysine 51, and lysine 56 each participate in a glycyl lysine isopeptide (Lys-Gly) (interchain with G-Cter in SUMO2) cross-link. Residues lysine 157 and lysine 169 each participate in a glycyl lysine isopeptide (Lys-Gly) (interchain with G-Cter in SUMO) cross-link. Residue lysine 173 forms a Glycyl lysine isopeptide (Lys-Gly) (interchain with G-Cter in SUMO2) linkage. Positions 212–292 are interaction with TERF2IP; that stretch reads YECNVCGKAF…HIRHQKIHTH (81 aa).

Belongs to the krueppel C2H2-type zinc-finger protein family. Binds DNA. Interacts with SUMO conjugating enzyme UBC9/UBE2I. Interacts with the telomeric protein TERF2IP. Sumoylated. In terms of tissue distribution, liver, skeletal and heart muscle, mammary cells. Very low levels in brain, lung, placenta and kidney. Strongly overexpressed in many pancreas and colorectal cancers. Increased gene copy numbers are detected in 3 of 12 tumor cell lines and 2 of 12 primary pancreatic carcinomas. Overexpressed in 80% of colorectal cancers.

It localises to the nucleus. The polypeptide is Zinc finger protein OZF (ZNF146) (Homo sapiens (Human)).